Consider the following 376-residue polypeptide: E3 ubiquitin-protein ligase RNF34 (376 aa).

The FYVE-type zinc finger occupies 56 to 107; sequence EGPNIVCKACGLSFSVFRKKHVCCDCKKDFCSLCSVSQENLRRCSTCHLLQE. Residues 115–134 form the SAP 1 domain; it reads LMRLKVKDLRQYLLLRNIPT. Position 169 is a phosphoserine (serine 169). Residues 216 to 256 form a disordered region; it reads IASANTDDDDDDDDDDDDDEDDDDEQEEEEQNPGLSKKKAR. Over residues 221–246 the composition is skewed to acidic residues; it reads TDDDDDDDDDDDDDEDDDDEQEEEEQ. Residues serine 258 and serine 260 each carry the phosphoserine modification. Residues 268 to 282 enclose the SAP 2 domain; it reads VEGMSVRQLKEILAR. An RING-type zinc finger spans residues 329–364; sequence CRICMDAVIDCVLLECGHMVTCTKCGKRMSECPICR.

Interacts with CASP8 and CASP10. Interacts with p53/TP53; involved in p53/TP53 ubiquitination. Interacts (via RING-type zinc finger) with MDM2; the interaction stabilizes MDM2. Interacts (via RING-type zinc finger) with PPARGC1A. Interacts with NOD1. In terms of processing, autoubiquitinated (in vitro). Post-translationally, proteolytically cleaved by caspases upon induction of apoptosis by TNF.

Its subcellular location is the cell membrane. The protein resides in the endomembrane system. It localises to the nucleus. It is found in the nucleus speckle. The protein localises to the cytoplasm. Its subcellular location is the cytosol. The enzyme catalyses S-ubiquitinyl-[E2 ubiquitin-conjugating enzyme]-L-cysteine + [acceptor protein]-L-lysine = [E2 ubiquitin-conjugating enzyme]-L-cysteine + N(6)-ubiquitinyl-[acceptor protein]-L-lysine.. It participates in protein modification; protein ubiquitination. Its function is as follows. E3 ubiquitin-protein ligase that regulates several biological processes through the ubiquitin-mediated proteasomal degradation of various target proteins. Ubiquitinates the caspases CASP8 and CASP10, promoting their proteasomal degradation, to negatively regulate cell death downstream of death domain receptors in the extrinsic pathway of apoptosis. May mediate 'Lys-48'-linked polyubiquitination of RIPK1 and its subsequent proteasomal degradation thereby indirectly regulating the tumor necrosis factor-mediated signaling pathway. Negatively regulates p53/TP53 through its direct ubiquitination and targeting to proteasomal degradation. Indirectly, may also negatively regulate p53/TP53 through ubiquitination and degradation of SFN. Mediates PPARGC1A proteasomal degradation probably through ubiquitination thereby indirectly regulating the metabolism of brown fat cells. Possibly involved in innate immunity, through 'Lys-48'-linked polyubiquitination of NOD1 and its subsequent proteasomal degradation. The sequence is that of E3 ubiquitin-protein ligase RNF34 from Mus musculus (Mouse).